The sequence spans 146 residues: Large ribosomal subunit protein uL15 (146 aa).

A compositionally biased stretch (basic and acidic residues) spans 1-13 (MKLHELQPAEGSR). Residues 1–58 (MKLHELQPAEGSRKVRNRVGRGIGSGNGKTAGKGHKGQKARSGGGVRPGFEGGQNPLY) form a disordered region. Composition is skewed to gly residues over residues 21 to 31 (RGIGSGNGKTA) and 42 to 52 (SGGGVRPGFEG).

The protein belongs to the universal ribosomal protein uL15 family. In terms of assembly, part of the 50S ribosomal subunit.

Binds to the 23S rRNA. The polypeptide is Large ribosomal subunit protein uL15 (Shouchella clausii (strain KSM-K16) (Alkalihalobacillus clausii)).